The primary structure comprises 149 residues: Placenta growth factor (149 aa).

The signal sequence occupies residues 1–18 (MPTVRLFTCFLQLLTGLV). N33 is a glycosylation site (N-linked (GlcNAc...) asparagine). 3 cysteine pairs are disulfide-bonded: C52/C94, C83/C128, and C87/C130. The N-linked (GlcNAc...) asparagine glycan is linked to N101.

Belongs to the PDGF/VEGF growth factor family. Antiparallel homodimer; disulfide-linked. Also found as heterodimer with VEGFA/VEGF.

The protein resides in the secreted. Growth factor active in angiogenesis and endothelial cell growth, stimulating their proliferation and migration. It binds to the receptor FLT1/VEGFR-1. Also promotes cell tumor growth. This Bos taurus (Bovine) protein is Placenta growth factor (PGF).